Here is a 255-residue protein sequence, read N- to C-terminus: Pimeloyl-[acyl-carrier protein] methyl ester esterase (255 aa).

Substrate-binding positions include W18, 78–79 (SL), and 139–143 (FLALD). The Nucleophile role is filled by S78. Residues D203 and H233 contribute to the active site. A substrate-binding site is contributed by H233.

This sequence belongs to the AB hydrolase superfamily. Carboxylesterase BioH family. As to quaternary structure, monomer.

It is found in the cytoplasm. It carries out the reaction 6-carboxyhexanoyl-[ACP] methyl ester + H2O = 6-carboxyhexanoyl-[ACP] + methanol + H(+). It participates in cofactor biosynthesis; biotin biosynthesis. The physiological role of BioH is to remove the methyl group introduced by BioC when the pimeloyl moiety is complete. It allows to synthesize pimeloyl-ACP via the fatty acid synthetic pathway through the hydrolysis of the ester bonds of pimeloyl-ACP esters. In Xylella fastidiosa (strain M12), this protein is Pimeloyl-[acyl-carrier protein] methyl ester esterase.